The primary structure comprises 368 residues: Isopentenyl-diphosphate delta-isomerase (368 aa).

Residue 7–8 coordinates substrate; the sequence is RK. FMN contacts are provided by residues Thr-65, 66-68, Ser-96, and Asn-125; that span reads GMT. 96-98 provides a ligand contact to substrate; sequence SQR. Gln-160 contributes to the substrate binding site. Glu-161 serves as a coordination point for Mg(2+). FMN is bound by residues Lys-193, Ser-218, Thr-223, 275–277, and 296–297; these read GIR and AL.

It belongs to the IPP isomerase type 2 family. Homooctamer. Dimer of tetramers. FMN is required as a cofactor. Requires NADPH as cofactor. Mg(2+) serves as cofactor.

Its subcellular location is the cytoplasm. It carries out the reaction isopentenyl diphosphate = dimethylallyl diphosphate. Functionally, involved in the biosynthesis of isoprenoids. Catalyzes the 1,3-allylic rearrangement of the homoallylic substrate isopentenyl (IPP) to its allylic isomer, dimethylallyl diphosphate (DMAPP). This chain is Isopentenyl-diphosphate delta-isomerase, found in Saccharolobus shibatae (strain ATCC 51178 / DSM 5389 / JCM 8931 / NBRC 15437 / B12) (Sulfolobus shibatae).